The primary structure comprises 622 residues: Chaperone protein HscA homolog (622 aa).

This sequence belongs to the heat shock protein 70 family.

Chaperone involved in the maturation of iron-sulfur cluster-containing proteins. Has a low intrinsic ATPase activity which is markedly stimulated by HscB. This Burkholderia multivorans (strain ATCC 17616 / 249) protein is Chaperone protein HscA homolog.